We begin with the raw amino-acid sequence, 177 residues long: Adenine phosphoribosyltransferase (177 aa).

The protein belongs to the purine/pyrimidine phosphoribosyltransferase family. In terms of assembly, homodimer.

It is found in the cytoplasm. The enzyme catalyses AMP + diphosphate = 5-phospho-alpha-D-ribose 1-diphosphate + adenine. It participates in purine metabolism; AMP biosynthesis via salvage pathway; AMP from adenine: step 1/1. In terms of biological role, catalyzes a salvage reaction resulting in the formation of AMP, that is energically less costly than de novo synthesis. This chain is Adenine phosphoribosyltransferase, found in Anaeromyxobacter sp. (strain Fw109-5).